The following is a 195-amino-acid chain: MAFVLSLLMALVLVSYGPGGSLGCYLSRKLMLDARENLKLLDRMNRLSPHSCLQDRKDFGLPQEMVEGDQLQKDQAFPVLYEMLQQSFNLFYTEHSSAAWDTTLLEQLCTGLQQQLDHLDTCRGQVMGEEDSELGNMDPIVTVKKYFQGIYDYLQEKGYSDCAWEIVRVEMMRALTVSTTLQKRLTKMGGDLNSP.

The signal sequence occupies residues 1–23; sequence MAFVLSLLMALVLVSYGPGGSLG. Disulfide bonds link cysteine 24/cysteine 122 and cysteine 52/cysteine 162.

The protein belongs to the alpha/beta interferon family. IFN-alphaII subfamily. In terms of tissue distribution, constitutively and exclusively expressed in the mononuclear cells of the extraembryonic trophectoderm.

The protein localises to the secreted. Its function is as follows. Paracrine hormone primarily responsible for maternal recognition of pregnancy. Interacts with endometrial receptors, probably type I interferon receptors, and blocks estrogen receptor expression, preventing the estrogen-induced increase in oxytocin receptor expression in the endometrium. This results in the suppression of the pulsatile endometrial release of the luteolytic hormone prostaglandin F2-alpha, hindering the regression of the corpus luteum (luteolysis) and therefore a return to ovarian cyclicity. This, and a possible direct effect of IFN-tau on prostaglandin synthesis, leads in turn to continued ovarian progesterone secretion, which stimulates the secretion by the endometrium of the nutrients required for the growth of the conceptus. In summary, displays particularly high antiviral and antiproliferative potency concurrently with particular weak cytotoxicity, high antiluteolytic activity and immunomodulatory properties. In contrast with other IFNs, IFN-tau is not virally inducible. In Ovis aries (Sheep), this protein is Interferon tau-1 (IFNT1).